The following is a 381-amino-acid chain: tRNA-specific 2-thiouridylase MnmA (381 aa).

Residues 14-21 (AMSGGVDS) and methionine 40 each bind ATP. Cysteine 108 acts as the Nucleophile in catalysis. Cysteine 108 and cysteine 205 are disulfide-bonded. Position 132 (glycine 132) interacts with ATP. The interaction with tRNA stretch occupies residues 155-157 (KDQ). Cysteine 205 acts as the Cysteine persulfide intermediate in catalysis. Residues 309 to 310 (RY) form an interaction with tRNA region.

The protein belongs to the MnmA/TRMU family.

The protein resides in the cytoplasm. The enzyme catalyses S-sulfanyl-L-cysteinyl-[protein] + uridine(34) in tRNA + AH2 + ATP = 2-thiouridine(34) in tRNA + L-cysteinyl-[protein] + A + AMP + diphosphate + H(+). Catalyzes the 2-thiolation of uridine at the wobble position (U34) of tRNA, leading to the formation of s(2)U34. The chain is tRNA-specific 2-thiouridylase MnmA from Deinococcus geothermalis (strain DSM 11300 / CIP 105573 / AG-3a).